The primary structure comprises 259 residues: (3R)-3-hydroxyacyl-CoA dehydrogenase (259 aa).

NAD(+)-binding positions include 13–21 (LVTGAGSGI) and 40–41 (DL). The residue at position 58 (Ser-58) is a Phosphoserine. Lys-66 carries the post-translational modification N6-acetyllysine. 72–74 (ADV) contributes to the NAD(+) binding site. Ser-154 is a substrate binding site. Position 158 is an N6-succinyllysine (Lys-158). Tyr-167 (proton acceptor) is an active-site residue. Residues 167–171 (YASSK) and 200–202 (IAT) contribute to the NAD(+) site. N6-succinyllysine is present on Lys-171.

This sequence belongs to the short-chain dehydrogenases/reductases (SDR) family. In terms of assembly, heterotetramer with CBR4; contains two molecules of HSD17B8 and CBR4. In terms of tissue distribution, kidney, liver, testis, ovary and spleen. Oviduct, uterus, mammary gland, vagina, prostate, clitoral gland and moderately heart, dorsal skin, brain and lung.

Its subcellular location is the mitochondrion matrix. It carries out the reaction a (3R)-3-hydroxyacyl-CoA + NAD(+) = a 3-oxoacyl-CoA + NADH + H(+). It catalyses the reaction 17beta-estradiol + NAD(+) = estrone + NADH + H(+). The catalysed reaction is testosterone + NAD(+) = androst-4-ene-3,17-dione + NADH + H(+). The enzyme catalyses 17beta-hydroxy-5alpha-androstan-3-one + NAD(+) = 5alpha-androstan-3,17-dione + NADH + H(+). Its pathway is lipid metabolism; fatty acid biosynthesis. The protein operates within steroid biosynthesis; estrogen biosynthesis. It participates in lipid metabolism; mitochondrial fatty acid beta-oxidation. Functionally, required for the solubility and assembly of the heterotetramer 3-ketoacyl-[acyl carrier protein] (ACP) reductase functional complex (KAR or KAR1) that forms part of the mitochondrial fatty acid synthase (mtFAS). Alpha-subunit of the KAR complex, acts as scaffold protein, required for the stability of carbonyl reductase type-4 (CBR4, beta-subunit of the KAR complex) and for its 3-ketoacyl-ACP reductase activity, thereby participating in mitochondrial fatty acid biosynthesis. Catalyzes the NAD-dependent conversion of (3R)-3-hydroxyacyl-CoA into 3-ketoacyl-CoA (3-oxoacyl-CoA) with no chain length preference, this enzymatic activity is not needed for the KAR function. Prefers (3R)-3-hydroxyacyl-CoA over (3S)-3-hydroxyacyl-CoA and displays enzymatic activity only in the presence of NAD(+)(H). Cooperates with enoyl-CoA hydratase 1 in mitochondria, together they constitute an alternative route to the auxiliary enzyme pathways for the breakdown of Z-PUFA (cis polyunsaturated fatty acid) enoyl-esters. NAD-dependent 17-beta-hydroxysteroid dehydrogenase with highest activity towards estradiol. It efficiently catalyzes the oxidation of estradiol (E2), testosterone, and dihydrotestosterone. Primarily an oxidative enzyme, it can switch to a reductive mode determined in the appropriate physiologic milieu and catalyze the reduction of estrone (E1) to form biologically active estradiol (E2). In Mus musculus (Mouse), this protein is (3R)-3-hydroxyacyl-CoA dehydrogenase (Hsd17b8).